Consider the following 1184-residue polypeptide: DNA polymerase III subunit alpha (1184 aa).

It belongs to the DNA polymerase type-C family. DnaE subfamily. The Pol III holoenzyme complex contains at least 10 different subunits organized into 3 functionally essential subassemblies: the Pol III core, the beta sliding clamp processivity factor and the clamp-loading complex. The Pol III core (subunits alpha, epsilon and theta) contains the polymerase and the 3'-5' exonuclease proofreading activities. The polymerase is tethered to the template via the dimeric beta sliding clamp processivity factor. The clamp loader (also called gamma complex) assembles the beta sliding clamp onto the primed template and plays a central role in the organization and communication at the replication fork. The clamp-loading complex contains delta, delta', psi and chi, and 3 copies of either or both of two different DnaX proteins, gamma and tau. The DNA replisome complex has a single clamp loader (3 tau and 1 each of delta, delta', psi and chi subunits) which binds 3 Pol III cores (1 core on the leading strand and 2 on the lagging strand) each with a beta sliding clamp dimer. Interacts with the beta-sliding clamp (DnaN). Co-immunoprecipitates with DarG in the presence and absence of darT.

The protein resides in the cytoplasm. The enzyme catalyses DNA(n) + a 2'-deoxyribonucleoside 5'-triphosphate = DNA(n+1) + diphosphate. In terms of biological role, DNA polymerase III is a complex, multichain enzyme responsible for most of the replicative synthesis in bacteria. Pol III also exhibits 3' to 5' exonuclease activity. The alpha chain is the DNA polymerase. The protein is DNA polymerase III subunit alpha (dnaE1) of Mycobacterium tuberculosis (strain ATCC 25618 / H37Rv).